The primary structure comprises 89 residues: Small ribosomal subunit protein uS15 (89 aa).

Belongs to the universal ribosomal protein uS15 family. In terms of assembly, part of the 30S ribosomal subunit. Forms a bridge to the 50S subunit in the 70S ribosome, contacting the 23S rRNA.

In terms of biological role, one of the primary rRNA binding proteins, it binds directly to 16S rRNA where it helps nucleate assembly of the platform of the 30S subunit by binding and bridging several RNA helices of the 16S rRNA. Functionally, forms an intersubunit bridge (bridge B4) with the 23S rRNA of the 50S subunit in the ribosome. The protein is Small ribosomal subunit protein uS15 of Brevibacillus brevis (strain 47 / JCM 6285 / NBRC 100599).